Here is a 356-residue protein sequence, read N- to C-terminus: UDP-3-O-acylglucosamine N-acyltransferase (356 aa).

Catalysis depends on His251, which acts as the Proton acceptor.

The protein belongs to the transferase hexapeptide repeat family. LpxD subfamily. As to quaternary structure, homotrimer.

It carries out the reaction a UDP-3-O-[(3R)-3-hydroxyacyl]-alpha-D-glucosamine + a (3R)-hydroxyacyl-[ACP] = a UDP-2-N,3-O-bis[(3R)-3-hydroxyacyl]-alpha-D-glucosamine + holo-[ACP] + H(+). It functions in the pathway bacterial outer membrane biogenesis; LPS lipid A biosynthesis. Its function is as follows. Catalyzes the N-acylation of UDP-3-O-acylglucosamine using 3-hydroxyacyl-ACP as the acyl donor. Is involved in the biosynthesis of lipid A, a phosphorylated glycolipid that anchors the lipopolysaccharide to the outer membrane of the cell. The protein is UDP-3-O-acylglucosamine N-acyltransferase of Ralstonia nicotianae (strain ATCC BAA-1114 / GMI1000) (Ralstonia solanacearum).